The sequence spans 76 residues: Anaredoxin (76 aa).

One can recognise an HNH domain in the interval 24-66 (CMVCWEVNSKANGHHLIPYSEGGSADIQNMMTLCPSCHTKYHK).

It belongs to the HNH nuclease family.

Its function is as follows. Putative P-450 reductase. This is Anaredoxin from Nostoc sp. (strain PCC 7120 / SAG 25.82 / UTEX 2576).